The chain runs to 825 residues: Probable inorganic carbon transporter subunit DabA (825 aa).

Residues C334, D336, H521, and C536 each coordinate Zn(2+).

It belongs to the inorganic carbon transporter (TC 9.A.2) DabA family. Forms a complex with DabB. Requires Zn(2+) as cofactor.

The protein resides in the cell inner membrane. Functionally, part of an energy-coupled inorganic carbon pump. The protein is Probable inorganic carbon transporter subunit DabA of Acidithiobacillus ferrooxidans (strain ATCC 23270 / DSM 14882 / CIP 104768 / NCIMB 8455) (Ferrobacillus ferrooxidans (strain ATCC 23270)).